The sequence spans 118 residues: Large ribosomal subunit protein uL22 (118 aa).

Belongs to the universal ribosomal protein uL22 family. As to quaternary structure, part of the 50S ribosomal subunit.

This protein binds specifically to 23S rRNA; its binding is stimulated by other ribosomal proteins, e.g. L4, L17, and L20. It is important during the early stages of 50S assembly. It makes multiple contacts with different domains of the 23S rRNA in the assembled 50S subunit and ribosome. Functionally, the globular domain of the protein is located near the polypeptide exit tunnel on the outside of the subunit, while an extended beta-hairpin is found that lines the wall of the exit tunnel in the center of the 70S ribosome. This Chlorobium limicola (strain DSM 245 / NBRC 103803 / 6330) protein is Large ribosomal subunit protein uL22.